We begin with the raw amino-acid sequence, 207 residues long: Imidazole glycerol phosphate synthase subunit HisH (207 aa).

The Glutamine amidotransferase type-1 domain maps to 1-206; the sequence is MMIVIDYDAG…KEYVYENTAR (206 aa). The Nucleophile role is filled by cysteine 79. Active-site residues include histidine 181 and glutamate 183.

Heterodimer of HisH and HisF.

Its subcellular location is the cytoplasm. It carries out the reaction 5-[(5-phospho-1-deoxy-D-ribulos-1-ylimino)methylamino]-1-(5-phospho-beta-D-ribosyl)imidazole-4-carboxamide + L-glutamine = D-erythro-1-(imidazol-4-yl)glycerol 3-phosphate + 5-amino-1-(5-phospho-beta-D-ribosyl)imidazole-4-carboxamide + L-glutamate + H(+). The enzyme catalyses L-glutamine + H2O = L-glutamate + NH4(+). The protein operates within amino-acid biosynthesis; L-histidine biosynthesis; L-histidine from 5-phospho-alpha-D-ribose 1-diphosphate: step 5/9. Its function is as follows. IGPS catalyzes the conversion of PRFAR and glutamine to IGP, AICAR and glutamate. The HisH subunit catalyzes the hydrolysis of glutamine to glutamate and ammonia as part of the synthesis of IGP and AICAR. The resulting ammonia molecule is channeled to the active site of HisF. The polypeptide is Imidazole glycerol phosphate synthase subunit HisH (Streptococcus sanguinis (strain SK36)).